The chain runs to 307 residues: Estrogen receptor (307 aa).

Residues 1 to 43 constitute a DNA-binding region (nuclear receptor); sequence GHNDYMCPATNQCTIDKNRRKSCQACRLRKCYEVGMMKGGIRK. The segment at 7–31 adopts an NR C4-type zinc-finger fold; that stretch reads CPATNQCTIDKNRRKSCQACRLRKC. The hinge stretch occupies residues 44–95; that stretch reads DRRGGRILKHKRQREEHDNRNAGAIVERRSPNLWPSPLMITHNKKNSPALSL. Residues 96–307 enclose the NR LBD domain; the sequence is TADQIVSALL…HFRHMSNKGM (212 aa).

Belongs to the nuclear hormone receptor family. NR3 subfamily. Binds DNA as a homodimer. Can form a heterodimer with ER-beta.

The protein localises to the nucleus. The steroid hormones and their receptors are involved in the regulation of eukaryotic gene expression and affect cellular proliferation and differentiation in target tissues. This is Estrogen receptor (ESR1) from Aspidoscelis uniparens (Desert grassland whiptail lizard).